Consider the following 145-residue polypeptide: Ribonuclease H (145 aa).

One can recognise an RNase H type-1 domain in the interval serine 2–isoleucine 143. Mg(2+) is bound by residues aspartate 11, glutamate 49, aspartate 71, and aspartate 135.

This sequence belongs to the RNase H family. In terms of assembly, monomer. It depends on Mg(2+) as a cofactor.

The protein localises to the cytoplasm. The enzyme catalyses Endonucleolytic cleavage to 5'-phosphomonoester.. Functionally, endonuclease that specifically degrades the RNA of RNA-DNA hybrids. The protein is Ribonuclease H of Wolbachia sp. subsp. Drosophila simulans (strain wRi).